Consider the following 167-residue polypeptide: MFPMVTGFMNYGQQTVRAARYIGQSFMITLSHANRLPVTIQYPYEKLITSERFRGRIHFEFDKCIACEVCVRVCPIDLPVVDWKLETDIRKKQLLNYSIDFGICIFCGNCVEYCPTNCLSMTEEYELSTYDRHELNYNQIALGRLPMSVIDDYTIRTILNSPQITSE.

4Fe-4S ferredoxin-type domains follow at residues 55–84 (GRIH…VDWK) and 95–124 (LNYS…MTEE). Cys-64, Cys-67, Cys-70, Cys-74, Cys-104, Cys-107, Cys-110, and Cys-114 together coordinate [4Fe-4S] cluster.

This sequence belongs to the complex I 23 kDa subunit family. In terms of assembly, NDH is composed of at least 16 different subunits, 5 of which are encoded in the nucleus. [4Fe-4S] cluster is required as a cofactor.

Its subcellular location is the plastid. It localises to the chloroplast thylakoid membrane. It catalyses the reaction a plastoquinone + NADH + (n+1) H(+)(in) = a plastoquinol + NAD(+) + n H(+)(out). The enzyme catalyses a plastoquinone + NADPH + (n+1) H(+)(in) = a plastoquinol + NADP(+) + n H(+)(out). Functionally, NDH shuttles electrons from NAD(P)H:plastoquinone, via FMN and iron-sulfur (Fe-S) centers, to quinones in the photosynthetic chain and possibly in a chloroplast respiratory chain. The immediate electron acceptor for the enzyme in this species is believed to be plastoquinone. Couples the redox reaction to proton translocation, and thus conserves the redox energy in a proton gradient. This Vitis vinifera (Grape) protein is NAD(P)H-quinone oxidoreductase subunit I, chloroplastic.